We begin with the raw amino-acid sequence, 434 residues long: uncharacterized protein (434 aa).

At Lys-216 the chain carries N6-(pyridoxal phosphate)lysine.

This is an uncharacterized protein from Schizosaccharomyces pombe (strain 972 / ATCC 24843) (Fission yeast).